The following is an 880-amino-acid chain: MTSAETNAYDPQQVESAAQKYWDATRAFEVDETSDKPKYYCLSMLPYPSGALHMGHVRNYTIGDVISRYKRMTGHNVLQPMGWDAFGLPAENAAIKNKTAPAAWTYKNIEHMRGQFKAMGYAVDWSREFATCRPDYYVHEQRMFTRLMRKGLAYRRNAVVNWDPVDQTVLANEQVIDGRGWRSGALVEKREIPQWFLRITDYAQELLDGLDELDGWPDSVKTMQRNWIGRSEGLEIQFDVRDVDGTALDPLRVFTTRPDTVMGVTFVSIAAEHPLALHAAKNNPELAALLSEMKQGGVSEAELETQEKRGMDTGLRAIHPVTGEKVPVWVANFVLMGYGTGAVMAVPGHDQRDNEVANKYGLPIKQVIALKDPRNDDERTWDGARWQDWYSDKNRAFELVNSAEFDGLDFQGAFEALAERFERKAQGQRRVNYRLRDWGVSRQRYWGCPIPVIYCDKCGAVPVPEEQLPVVLPEDVAFSGTGSPIKTDPEWRKTTCPECGGAAERETDTFDTFMESSWYYARYTSPGARDAVDKRGNYWLPVDQYIGGIEHAILHLMYFRFYHKLLRDARMVDSNEPARNLLCQGMVIAETYYRPNPDGSKDWINPADVEVQRDERGRITGATLIADGQPVVVGGTEKMSKSKNNGVDPQAMVDKYGADTVRLFSMFAAPPEQSLEWNEAGVDGMARFLRRLWAQVQKHAADGAAPALDVAALDANQKALRRKTHETIGKVGDDYGRRHSFNTAIAAVMELMNALAKFEDGSEQGRAVRQEALQAIVLLLNPITPHASHALWQVLGHGETLLEDQPFPQADAGALVRDALTLAVQVNGKLRGTIEVAADAAREQVEALALAEPNAAKFMEGLTVRKIIIVPGKIVNIVAA.

The short motif at 46-56 is the 'HIGH' region element; that stretch reads PYPSGALHMGH. The short motif at 638–642 is the 'KMSKS' region element; sequence KMSKS. Lysine 641 contributes to the ATP binding site.

This sequence belongs to the class-I aminoacyl-tRNA synthetase family.

Its subcellular location is the cytoplasm. It carries out the reaction tRNA(Leu) + L-leucine + ATP = L-leucyl-tRNA(Leu) + AMP + diphosphate. The sequence is that of Leucine--tRNA ligase from Stenotrophomonas maltophilia (strain K279a).